The following is a 436-amino-acid chain: Methylenetetrahydrofolate--tRNA-(uracil-5-)-methyltransferase TrmFO (436 aa).

Residue 9-14 (GAGLAG) coordinates FAD.

Belongs to the MnmG family. TrmFO subfamily. The cofactor is FAD.

Its subcellular location is the cytoplasm. The enzyme catalyses uridine(54) in tRNA + (6R)-5,10-methylene-5,6,7,8-tetrahydrofolate + NADH + H(+) = 5-methyluridine(54) in tRNA + (6S)-5,6,7,8-tetrahydrofolate + NAD(+). The catalysed reaction is uridine(54) in tRNA + (6R)-5,10-methylene-5,6,7,8-tetrahydrofolate + NADPH + H(+) = 5-methyluridine(54) in tRNA + (6S)-5,6,7,8-tetrahydrofolate + NADP(+). Its function is as follows. Catalyzes the folate-dependent formation of 5-methyl-uridine at position 54 (M-5-U54) in all tRNAs. The polypeptide is Methylenetetrahydrofolate--tRNA-(uracil-5-)-methyltransferase TrmFO (Ligilactobacillus salivarius (strain UCC118) (Lactobacillus salivarius)).